Reading from the N-terminus, the 222-residue chain is Sigma non-opioid intracellular receptor 1 (222 aa).

Residues methionine 1–tryptophan 7 are Lumenal-facing. Residues valine 8–leucine 29 traverse the membrane as a helical segment. Topologically, residues alanine 30–cysteine 222 are cytoplasmic. The tract at residues serine 98–leucine 105 is important for ligand-binding. Residues phenylalanine 176–cysteine 222 are C-terminal hydrophobic region.

Belongs to the ERG2 family. Homotrimer.

It is found in the nucleus inner membrane. The protein resides in the nucleus outer membrane. The protein localises to the nucleus envelope. It localises to the cytoplasmic vesicle. Its subcellular location is the endoplasmic reticulum membrane. It is found in the membrane. In terms of biological role, may function in lipid transport from the endoplasmic reticulum and be involved in a wide array of cellular functions probably through regulation of the biogenesis of lipid microdomains at the plasma membrane. May regulate calcium efflux at the endoplasmic reticulum. This chain is Sigma non-opioid intracellular receptor 1 (SIGMAR1), found in Gallus gallus (Chicken).